The following is a 54-amino-acid chain: Photosystem II reaction center protein K (54 aa).

The propeptide occupies 1–17; it reads MSFITLNNFFNTNTFFG. The helical transmembrane segment at 29-49 threads the bilayer; it reads LIDVLPIIPVLFFLLAFVWQA.

The protein belongs to the PsbK family. PSII is composed of 1 copy each of membrane proteins PsbA, PsbB, PsbC, PsbD, PsbE, PsbF, PsbH, PsbI, PsbJ, PsbK, PsbL, PsbM, PsbT, PsbY, PsbZ, Psb30/Ycf12, at least 3 peripheral proteins of the oxygen-evolving complex and a large number of cofactors. It forms dimeric complexes.

Its subcellular location is the plastid. The protein localises to the chloroplast thylakoid membrane. Its function is as follows. One of the components of the core complex of photosystem II (PSII). PSII is a light-driven water:plastoquinone oxidoreductase that uses light energy to abstract electrons from H(2)O, generating O(2) and a proton gradient subsequently used for ATP formation. It consists of a core antenna complex that captures photons, and an electron transfer chain that converts photonic excitation into a charge separation. The polypeptide is Photosystem II reaction center protein K (Euglena gracilis).